Reading from the N-terminus, the 130-residue chain is Glycoprotein hormone beta-5 (130 aa).

Residues 1–24 (MKLVYLVLGAVALLLLGGPDSVLS) form the signal peptide. 5 disulfides stabilise this stretch: Cys36-Cys84, Cys50-Cys99, Cys60-Cys115, Cys64-Cys117, and Cys120-Cys127. Residue Asn87 is glycosylated (N-linked (GlcNAc...) asparagine).

It belongs to the glycoprotein hormones subunit beta family. Heterodimer with GPHA2; this heterodimer interacts with thyroid-stimulating hormone receptor (TSHR), and hence stimulates cAMP production. In terms of processing, N-glycosylated. Expressed in the anterior lobe of pituitary.

It is found in the secreted. Functions as a heterodimeric glycoprotein hormone with GPHA2 able to bind and activate the thyroid-stimulating hormone receptor (TSHR), leading to increased cAMP production. Plays a central role in controlling thyroid cell metabolism. This chain is Glycoprotein hormone beta-5 (Gphb5), found in Mus musculus (Mouse).